Reading from the N-terminus, the 199-residue chain is Transmembrane protein 223 (199 aa).

Topologically, residues 1–43 (MVASVPLRNVSHLLSVLRSQNVPRYLQNGVPRDVLLFRHERGR) are mitochondrial matrix. A helical membrane pass occupies residues 44–64 (FFAILGLFCAGQGIFWTSLAV). Residues 65 to 94 (AALSRPLSRVPAEAPNRSYQDLRSALWRYG) lie on the Mitochondrial intermembrane side of the membrane. The helical transmembrane segment at 95–115 (LAVGCGTMGVLVLGAGLLYSL) threads the bilayer. The Mitochondrial matrix portion of the chain corresponds to 116–199 (RSVRSVMLLA…DNTVGAYRSL (84 aa)).

It belongs to the TMEM223 family. Associates with the mitochondrial ribosome.

Its subcellular location is the mitochondrion inner membrane. Its function is as follows. Mitochondrial ribosome-associated protein involved in the first steps of cytochrome c oxidase complex (complex IV) biogenesis. Stimulates the translation of MT-CO1 mRNA and is a constituent of early MT-CO1 assembly intermediates. The protein is Transmembrane protein 223 of Mus musculus (Mouse).